A 612-amino-acid polypeptide reads, in one-letter code: DNA mismatch repair protein MutL (612 aa).

Belongs to the DNA mismatch repair MutL/HexB family.

Its function is as follows. This protein is involved in the repair of mismatches in DNA. It is required for dam-dependent methyl-directed DNA mismatch repair. May act as a 'molecular matchmaker', a protein that promotes the formation of a stable complex between two or more DNA-binding proteins in an ATP-dependent manner without itself being part of a final effector complex. In Bartonella quintana (strain Toulouse) (Rochalimaea quintana), this protein is DNA mismatch repair protein MutL.